The following is a 274-amino-acid chain: Large ribosomal subunit protein uL2 (274 aa).

2 disordered regions span residues 28–54 (KPFAPLLEKNSKTGGRNNNGRITTRHI) and 221–274 (RGTA…RSKK). The segment covering 39 to 49 (KTGGRNNNGRI) has biased composition (polar residues).

It belongs to the universal ribosomal protein uL2 family. Part of the 50S ribosomal subunit. Forms a bridge to the 30S subunit in the 70S ribosome.

Its function is as follows. One of the primary rRNA binding proteins. Required for association of the 30S and 50S subunits to form the 70S ribosome, for tRNA binding and peptide bond formation. It has been suggested to have peptidyltransferase activity; this is somewhat controversial. Makes several contacts with the 16S rRNA in the 70S ribosome. The polypeptide is Large ribosomal subunit protein uL2 (Edwardsiella ictaluri (strain 93-146)).